Reading from the N-terminus, the 830-residue chain is ABC transporter G family member STR (830 aa).

Residues 1 to 551 are Cytoplasmic-facing; the sequence is MAKFKRTDTN…RTTLNVIRTP (551 aa). The ABC transporter domain occupies 46–297; sequence LEFNNLSYSV…LAGFARPVPD (252 aa). 90-97 lines the ATP pocket; it reads GPSGAGKS. 3 disordered regions span residues 333 to 356, 368 to 422, and 471 to 491; these read DQAA…PYAK, SHFS…SMQS, and SMSS…NKTP. Residues 368–378 show a composition bias toward polar residues; the sequence is SHFSTGNMNSQ. Residues 395–405 are compositionally biased toward acidic residues; it reads DYEDDDDEDEF. A compositionally biased stretch (low complexity) spans 471 to 483; the sequence is SMSSSQFSMTQQT. A helical transmembrane segment spans residues 552–572; sequence ELFLSREIVLTVMGLVLSSFF. The Extracellular portion of the chain corresponds to 573–588; that stretch reads KKLSHFDFKTINHLLN. Residues 589 to 609 traverse the membrane as a helical segment; that stretch reads FYIFTICLVFFSSNDAVPTFI. Over 610-630 the chain is Cytoplasmic; that stretch reads QERFIFIRETSHNAYRASSYV. Residues 631–651 traverse the membrane as a helical segment; that stretch reads ISSLIVYLPFFAIQGFTFAGI. The Extracellular portion of the chain corresponds to 652–661; that stretch reads TQYILHLNSS. N-linked (GlcNAc...) asparagine glycosylation is present at Asn-659. A helical membrane pass occupies residues 662-682; the sequence is ILSFWLILYSSLVTSNAYVML. Topologically, residues 683 to 690 are cytoplasmic; the sequence is VSALVPSY. A helical transmembrane segment spans residues 691-711; that stretch reads ITGYAVVIATTALFFLTCGFF. At 712 to 798 the chain is on the extracellular side; the sequence is LKRTQIPLVW…LFSMDIREEN (87 aa). Residues Asn-771 and Asn-780 are each glycosylated (N-linked (GlcNAc...) asparagine). The helical transmembrane segment at 799–819 threads the bilayer; it reads IWLDIVILLAWGVLYRLFFYV. Over 820-830 the chain is Cytoplasmic; it reads VLRFYSKNERK.

This sequence belongs to the ABC transporter superfamily. ABCG family. Stunted arbuscule (STR) subfamily. In terms of assembly, heterodimerizes with STR2; the resulting transporter is located in the peri-arbuscular membrane.

It is found in the cell membrane. Together with STR2, required for arbuscule development in arbuscular mycorrhizal (AM) symbiosis. This Petunia hybrida (Petunia) protein is ABC transporter G family member STR.